The chain runs to 113 residues: Protein translation factor SUI1 homolog (113 aa).

The protein belongs to the SUI1 family.

Functionally, probably involved in translation. The protein is Protein translation factor SUI1 homolog of Salix bakko (Japanese willow).